Reading from the N-terminus, the 338-residue chain is 1-aminocyclopropane-1-carboxylate deaminase (338 aa).

K51 is subject to N6-(pyridoxal phosphate)lysine. S78 (nucleophile) is an active-site residue.

It belongs to the ACC deaminase/D-cysteine desulfhydrase family. As to quaternary structure, homotrimer. Pyridoxal 5'-phosphate serves as cofactor.

It carries out the reaction 1-aminocyclopropane-1-carboxylate + H2O = 2-oxobutanoate + NH4(+). In terms of biological role, catalyzes a cyclopropane ring-opening reaction, the irreversible conversion of 1-aminocyclopropane-1-carboxylate (ACC) to ammonia and alpha-ketobutyrate. Allows growth on ACC as a nitrogen source. The sequence is that of 1-aminocyclopropane-1-carboxylate deaminase from Burkholderia lata (strain ATCC 17760 / DSM 23089 / LMG 22485 / NCIMB 9086 / R18194 / 383).